Consider the following 406-residue polypeptide: (R)-benzylsuccinyl-CoA dehydrogenase (406 aa).

The protein belongs to the acyl-CoA dehydrogenase family. In terms of assembly, homotetramer. Requires FAD as cofactor.

It carries out the reaction (R)-2-benzylsuccinyl-CoA + oxidized [electron-transfer flavoprotein] + H(+) = (E)-2-benzylidenesuccinyl-CoA + reduced [electron-transfer flavoprotein]. Its pathway is xenobiotic degradation; toluene degradation. Its activity is regulated as follows. Inhibited by (S)-benzylsuccinyl-CoA. Catalyzes the oxidation of benzylsuccinyl-CoA to benzylidenesuccinyl-CoA. The polypeptide is (R)-benzylsuccinyl-CoA dehydrogenase (bbsG) (Thauera aromatica).